The sequence spans 406 residues: E3 ubiquitin-protein ligase RING1 (406 aa).

Threonine 24 carries the post-translational modification Phosphothreonine. A necessary for transcriptional repression region spans residues 30-234 (MDGTEIAVSP…GGAGSEDSGD (205 aa)). Serine 38 carries the post-translational modification Phosphoserine. The RING-type zinc finger occupies 48–88 (CPICLDMLKNTMTTKECLHRFCSDCIVTALRSGNKECPTCR). Phosphoserine occurs at positions 140, 187, and 190. Disordered stretches follow at residues 148–263 (QAMH…GEIE) and 309–354 (QQQE…PSLE). Residues 175-187 (EPGEGEGDGEDVS) are compositionally biased toward acidic residues. Residues 201–204 (KRPR) carry the Nuclear localization signal motif. Over residues 205–228 (GGGAGGSSVGTGGGGTGGVGGGAG) the composition is skewed to gly residues. A phosphothreonine mark is found at threonine 215 and threonine 220. Residues serine 229 and serine 232 each carry the phosphoserine modification. Residues 230 to 406 (EDSGDRGGTL…LCYAPTKDPK (177 aa)) form a necessary for interaction with CBX2 region. Residues 235–244 (RGGTLGGGTL) show a composition bias toward gly residues. Over residues 246–258 (PPSPPGAPSPPEP) the composition is skewed to pro residues. A phosphoserine mark is found at serine 248 and serine 254. Residues 315–343 (EPGGPGGGASDTGGPDGCGGEGGGAGGGD) are compositionally biased toward gly residues.

In terms of assembly, component of chromatin-associated Polycomb (PcG) complexes. Interacts with BMI1. Part of the E2F6.com-1 complex in G0 phase composed of E2F6, MGA, MAX, TFDP1, CBX3, BAT8, EUHMTASE1, RING1, RNF2/RING2 MBLR, L3MBTL2 and YAF2. Interacts with CBX2 and PCGF6. Component of a PRC1-like complex. Component of repressive BCOR complex containing Polycomb group subcomplex at least composed of RYBP, PCGF1, BCOR and RNF2/RING2. Interacts with PCGF2, RNF2; CBX6, CBX7 and CBX8. Interacts with PHC2. Interacts with MN1. Interacts with USP26.

The protein resides in the nucleus. It localises to the nucleus speckle. The enzyme catalyses S-ubiquitinyl-[E2 ubiquitin-conjugating enzyme]-L-cysteine + [acceptor protein]-L-lysine = [E2 ubiquitin-conjugating enzyme]-L-cysteine + N(6)-ubiquitinyl-[acceptor protein]-L-lysine.. It participates in protein modification; protein ubiquitination. Constitutes one of the E3 ubiquitin-protein ligases that mediate monoubiquitination of 'Lys-119' of histone H2A, thereby playing a central role in histone code and gene regulation. H2A 'Lys-119' ubiquitination gives a specific tag for epigenetic transcriptional repression and participates in X chromosome inactivation of female mammals. Essential component of a Polycomb group (PcG) multiprotein PRC1-like complex, a complex class required to maintain the transcriptionally repressive state of many genes, including Hox genes, throughout development. PcG PRC1 complex acts via chromatin remodeling and modification of histones, rendering chromatin heritably changed in its expressibility. Compared to RNF2/RING2, it does not have the main E3 ubiquitin ligase activity on histone H2A, and it may rather act as a modulator of RNF2/RING2 activity. The chain is E3 ubiquitin-protein ligase RING1 from Homo sapiens (Human).